Consider the following 367-residue polypeptide: 2-aminoethylphosphonate--pyruvate transaminase (367 aa).

K194 carries the post-translational modification N6-(pyridoxal phosphate)lysine.

Belongs to the class-V pyridoxal-phosphate-dependent aminotransferase family. PhnW subfamily. In terms of assembly, homodimer. The cofactor is pyridoxal 5'-phosphate.

It catalyses the reaction (2-aminoethyl)phosphonate + pyruvate = phosphonoacetaldehyde + L-alanine. Functionally, involved in phosphonate degradation. The sequence is that of 2-aminoethylphosphonate--pyruvate transaminase from Salmonella paratyphi B (strain ATCC BAA-1250 / SPB7).